The chain runs to 425 residues: Kynurenine/alpha-aminoadipate aminotransferase, mitochondrial (425 aa).

A mitochondrion-targeting transit peptide spans 1–29 (MNYSRFLTATSLARKPSPIRTTADILSKA). A substrate-binding site is contributed by arginine 20. Phosphoserine is present on serine 40. At lysine 69 the chain carries N6-acetyllysine. A substrate-binding site is contributed by tyrosine 74. At lysine 172 the chain carries N6-succinyllysine. The residue at position 179 (lysine 179) is an N6-acetyllysine. Asparagine 202 provides a ligand contact to substrate. An N6-(pyridoxal phosphate)lysine; alternate modification is found at lysine 263. An N6-acetyllysine; alternate mark is found at lysine 263 and lysine 339. 2 positions are modified to N6-succinyllysine; alternate: lysine 263 and lysine 339. Lysine 351 carries the post-translational modification N6-acetyllysine. Residue lysine 367 is modified to N6-acetyllysine; alternate. Lysine 367 is modified (N6-succinyllysine; alternate). Arginine 399 provides a ligand contact to substrate. N6-acetyllysine is present on lysine 422.

Belongs to the class-I pyridoxal-phosphate-dependent aminotransferase family. In terms of assembly, homodimer. Pyridoxal 5'-phosphate is required as a cofactor. As to expression, expressed mainly in kidney and to a lesser amount in liver and brain.

The protein resides in the mitochondrion. The catalysed reaction is L-kynurenine + 2-oxoglutarate = kynurenate + L-glutamate + H2O. It carries out the reaction L-2-aminoadipate + 2-oxoglutarate = 2-oxoadipate + L-glutamate. It catalyses the reaction glycine + 2-oxoglutarate = glyoxylate + L-glutamate. The enzyme catalyses L-kynurenine + glyoxylate = kynurenate + glycine + H2O. The catalysed reaction is 3-hydroxy-L-kynurenine + glyoxylate = xanthurenate + glycine + H2O. It carries out the reaction 2-oxohexanoate + L-kynurenine = L-2-aminohexanoate + kynurenate + H2O. It catalyses the reaction 3-phenylpyruvate + L-kynurenine = kynurenate + L-phenylalanine + H2O. The enzyme catalyses 4-methylsulfanyl-2-oxobutanoate + L-kynurenine = kynurenate + L-methionine + H2O. The catalysed reaction is 2-oxo-3-sulfanylpropanoate + L-kynurenine = kynurenate + L-cysteine + H2O. It carries out the reaction indole-3-pyruvate + L-kynurenine = kynurenate + L-tryptophan + H2O. It catalyses the reaction 2-oxopentanoate + L-kynurenine = L-2-aminopentanoate + kynurenate + H2O. The enzyme catalyses 4-methyl-2-oxopentanoate + L-kynurenine = kynurenate + L-leucine + H2O. The catalysed reaction is glyoxylate + L-methionine = 4-methylsulfanyl-2-oxobutanoate + glycine. It carries out the reaction L-2-aminoadipate + glyoxylate = 2-oxoadipate + glycine. It catalyses the reaction L-tyrosine + glyoxylate = 3-(4-hydroxyphenyl)pyruvate + glycine. The enzyme catalyses glyoxylate + L-phenylalanine = 3-phenylpyruvate + glycine. The catalysed reaction is L-tryptophan + glyoxylate = indole-3-pyruvate + glycine. It carries out the reaction L-leucine + glyoxylate = 4-methyl-2-oxopentanoate + glycine. It catalyses the reaction 2-oxobutanoate + L-kynurenine = (2S)-2-aminobutanoate + kynurenate + H2O. The enzyme catalyses 2-oxoadipate + L-kynurenine = L-2-aminoadipate + kynurenate + H2O. Its pathway is amino-acid degradation; L-lysine degradation via saccharopine pathway; glutaryl-CoA from L-lysine: step 4/6. Its function is as follows. Transaminase with broad substrate specificity. Has transaminase activity towards aminoadipate, kynurenine, methionine and glutamate. Shows activity also towards tryptophan, aspartate and hydroxykynurenine. Accepts a variety of oxo-acids as amino-group acceptors, with a preference for 2-oxoglutarate, 2-oxocaproic acid, phenylpyruvate and alpha-oxo-gamma-methiol butyric acid. Can also use glyoxylate as amino-group acceptor (in vitro). The sequence is that of Kynurenine/alpha-aminoadipate aminotransferase, mitochondrial from Mus musculus (Mouse).